Here is a 53-residue protein sequence, read N- to C-terminus: uncharacterized protein (53 aa).

The protein localises to the mitochondrion. This is an uncharacterized protein from Saccharomyces cerevisiae (strain ATCC 204508 / S288c) (Baker's yeast).